Reading from the N-terminus, the 247-residue chain is Mitochondrial inner membrane protease ATP23 (247 aa).

The tract at residues 1-21 is disordered; the sequence is MSVPPPPKEDLIKPNPPKSES. A divalent metal cation is bound at residue His144. Residue Glu145 is part of the active site. Residue His148 coordinates a divalent metal cation.

It belongs to the peptidase M76 family.

The protein resides in the mitochondrion inner membrane. In terms of biological role, has a dual role in the assembly of mitochondrial ATPase. Acts as a protease that removes N-terminal residues of mitochondrial ATPase CF(0) subunit 6 at the intermembrane space side. Also involved in the correct assembly of the membrane-embedded ATPase CF(0) particle, probably mediating association of subunit 6 with the subunit 9 ring. This chain is Mitochondrial inner membrane protease ATP23 (ATP23), found in Kluyveromyces lactis (strain ATCC 8585 / CBS 2359 / DSM 70799 / NBRC 1267 / NRRL Y-1140 / WM37) (Yeast).